The primary structure comprises 556 residues: Oxygen-dependent choline dehydrogenase (556 aa).

6 to 35 lines the FAD pocket; that stretch reads DYIIIGAGSAGNVLAARLTEDPGVTVLLLE. The active-site Proton acceptor is the H475.

This sequence belongs to the GMC oxidoreductase family. FAD is required as a cofactor.

It catalyses the reaction choline + A = betaine aldehyde + AH2. The enzyme catalyses betaine aldehyde + NAD(+) + H2O = glycine betaine + NADH + 2 H(+). The protein operates within amine and polyamine biosynthesis; betaine biosynthesis via choline pathway; betaine aldehyde from choline (cytochrome c reductase route): step 1/1. Its function is as follows. Involved in the biosynthesis of the osmoprotectant glycine betaine. Catalyzes the oxidation of choline to betaine aldehyde and betaine aldehyde to glycine betaine at the same rate. This chain is Oxygen-dependent choline dehydrogenase, found in Xanthomonas axonopodis pv. citri (strain 306).